The chain runs to 264 residues: Proteasome assembly chaperone 2 (264 aa).

Position 137 is a phosphothreonine (T137).

The protein belongs to the PSMG2 family. As to quaternary structure, forms a heterodimer with PSMG1. The PSMG1-PSMG2 heterodimer interacts directly with the PSMA5 and PSMA7 proteasome alpha subunits. Degraded by the proteasome upon completion of 20S proteasome maturation.

It is found in the nucleus. In terms of biological role, chaperone protein which promotes assembly of the 20S proteasome as part of a heterodimer with PSMG1. The PSMG1-PSMG2 heterodimer binds to the PSMA5 and PSMA7 proteasome subunits, promotes assembly of the proteasome alpha subunits into the heteroheptameric alpha ring and prevents alpha ring dimerization. The protein is Proteasome assembly chaperone 2 of Mus musculus (Mouse).